The following is a 215-amino-acid chain: LysM and putative peptidoglycan-binding domain-containing protein 2 (215 aa).

The disordered stretch occupies residues 1–40 (MADSSPALSLREGGPRAPRPSAPSPPPRSRSGSESEEAEL). N-acetylalanine is present on Ala2. Phosphoserine is present on residues Ser5, Ser24, Ser33, and Ser57. Residues 17–28 (APRPSAPSPPPR) show a composition bias toward pro residues. Residues 71 to 115 (VEHRVRAGDTLQGIALKYGVTMEQIKRANKLFTNDCIFLKKTLNI) enclose the LysM domain. 2 disordered regions span residues 132-175 (DSPE…EEVS) and 193-215 (AAKKLKEESRDEESPYATSLYHS). A compositionally biased stretch (basic and acidic residues) spans 196 to 205 (KLKEESRDEE).

This is LysM and putative peptidoglycan-binding domain-containing protein 2 (LYSMD2) from Homo sapiens (Human).